A 187-amino-acid chain; its full sequence is Cell division protein SepF (187 aa).

A disordered region spans residues 21–97; it reads EVEVPDKQQQ…ATPNNASQES (77 aa). Polar residues-rich tracts occupy residues 38–63 and 70–97; these read EQSQ…YTTT and RMSN…SQES.

The protein belongs to the SepF family. In terms of assembly, homodimer. Interacts with FtsZ.

It localises to the cytoplasm. Functionally, cell division protein that is part of the divisome complex and is recruited early to the Z-ring. Probably stimulates Z-ring formation, perhaps through the cross-linking of FtsZ protofilaments. Its function overlaps with FtsA. The polypeptide is Cell division protein SepF (Staphylococcus aureus (strain Mu3 / ATCC 700698)).